Here is a 561-residue protein sequence, read N- to C-terminus: Potassium-transporting ATPase potassium-binding subunit (561 aa).

A run of 12 helical transmembrane segments spans residues 2 to 22 (GQGL…TPVL), 66 to 86 (IRAI…LIYF), 135 to 155 (ALGF…IAFI), 177 to 197 (ILLP…VPQT), 253 to 273 (LIET…YGVF), 280 to 300 (AWLL…VAAG), 327 to 347 (FGWA…CGAV), 354 to 374 (LMPQ…IWGG), 378 to 398 (GTAY…LMVG), 413 to 433 (IVLA…PSAI), 482 to 502 (LSTS…MLLL), and 531 to 551 (AGIV…LGPI).

It belongs to the KdpA family. In terms of assembly, the system is composed of three essential subunits: KdpA, KdpB and KdpC.

Its subcellular location is the cell inner membrane. Functionally, part of the high-affinity ATP-driven potassium transport (or Kdp) system, which catalyzes the hydrolysis of ATP coupled with the electrogenic transport of potassium into the cytoplasm. This subunit binds the periplasmic potassium ions and delivers the ions to the membrane domain of KdpB through an intramembrane tunnel. The protein is Potassium-transporting ATPase potassium-binding subunit of Nostoc sp. (strain PCC 7120 / SAG 25.82 / UTEX 2576).